The sequence spans 283 residues: Putative casein kinase II subunit beta-4 (283 aa).

2 disordered regions span residues 1–23 (MYKDRSGGGIMGGGGSSRSEILG) and 35–92 (LDKH…SEGD). Residues 7 to 16 (GGGIMGGGGS) show a composition bias toward gly residues. Over residues 58–70 (VPSTSTAKSQLHS) the composition is skewed to polar residues.

The protein belongs to the casein kinase 2 subunit beta family. Heterotetramer of two catalytic alpha subunits and two regulatory beta subunits. Post-translationally, phosphorylated by alpha subunit.

It is found in the cytoplasm. Its subcellular location is the cytosol. Its function is as follows. Plays a complex role in regulating the basal catalytic activity of the alpha subunit. The tetrameric holoenzyme CK2, composed of two alpha and two beta subunits, phosphorylates the transcription factor PIF1 after an exposure to light, resulting in a proteasome-dependent degradation of PIF1 and promotion of photomorphogenesis. CK2 phosphorylates translation initiation factors. May participate in the regulation of the initiation of translation. The chain is Putative casein kinase II subunit beta-4 from Arabidopsis thaliana (Mouse-ear cress).